The chain runs to 250 residues: MHHNRDVDLALVERPSSGYVYTTGWRLATTDIDEHQQLRLDGVARYIQEVGAEHLADAQLAEVHPHWIVLRTVIDVINPIELPSDITFHRWCAALSTRWCSMRVQLQGSAGGRIETEGFWICVNKDTLTPSRLTDDCIARFGSTTENHRLKWRPWLTGPNIDGTETPFPLRRTDIDPFEHVNNTIYWHGVHEILCQIPTLTAPYRAVLEYRSPIKSGEPLTIRYEQHDDVVRMHFVVGDDVRAAALLRRL.

This is an uncharacterized protein from Mycobacterium tuberculosis (strain CDC 1551 / Oshkosh).